A 337-amino-acid polypeptide reads, in one-letter code: MIEQDRIISAELKGNDRQVDRAIRPQALAEYIGQPVVREQMEIFIQAARQRGEPLDHTLIFGPPGLGKTTLANIIGNEMGAEVRTTSGPVLERAGDLAALLTNLNEGDILFIDEIHRLSPAIEEVLYPAMEDYQLDIMIGEGPAARSIKIELPPFTLVGATTRAGLLTSPLRDRFGIVQRLEFYDVESLTTIVARSAGKMGVELDQSGCFEVARRSRGTPRIANRLLRRVRDVAQVSGEVLVGQKVAQRALDMLSVDSQGFDHLDRRMLLTMIEKFDGRPVGLDSVSAALGEDKDTIEDVIEPFLIQQGFIIRTPRGRQVTKRAYEHFNYQLPSDFK.

The tract at residues 4-184 (QDRIISAELK…FGIVQRLEFY (181 aa)) is large ATPase domain (RuvB-L). Residues Ile23, Arg24, Gly65, Lys68, Thr69, Thr70, 131–133 (EDY), Arg174, Tyr184, and Arg221 each bind ATP. Residue Thr69 coordinates Mg(2+). The tract at residues 185-255 (DVESLTTIVA…VAQRALDMLS (71 aa)) is small ATPAse domain (RuvB-S). The head domain (RuvB-H) stretch occupies residues 258 to 337 (SQGFDHLDRR…FNYQLPSDFK (80 aa)). DNA contacts are provided by Arg313 and Arg318.

This sequence belongs to the RuvB family. As to quaternary structure, homohexamer. Forms an RuvA(8)-RuvB(12)-Holliday junction (HJ) complex. HJ DNA is sandwiched between 2 RuvA tetramers; dsDNA enters through RuvA and exits via RuvB. An RuvB hexamer assembles on each DNA strand where it exits the tetramer. Each RuvB hexamer is contacted by two RuvA subunits (via domain III) on 2 adjacent RuvB subunits; this complex drives branch migration. In the full resolvosome a probable DNA-RuvA(4)-RuvB(12)-RuvC(2) complex forms which resolves the HJ.

Its subcellular location is the cytoplasm. It carries out the reaction ATP + H2O = ADP + phosphate + H(+). Functionally, the RuvA-RuvB-RuvC complex processes Holliday junction (HJ) DNA during genetic recombination and DNA repair, while the RuvA-RuvB complex plays an important role in the rescue of blocked DNA replication forks via replication fork reversal (RFR). RuvA specifically binds to HJ cruciform DNA, conferring on it an open structure. The RuvB hexamer acts as an ATP-dependent pump, pulling dsDNA into and through the RuvAB complex. RuvB forms 2 homohexamers on either side of HJ DNA bound by 1 or 2 RuvA tetramers; 4 subunits per hexamer contact DNA at a time. Coordinated motions by a converter formed by DNA-disengaged RuvB subunits stimulates ATP hydrolysis and nucleotide exchange. Immobilization of the converter enables RuvB to convert the ATP-contained energy into a lever motion, pulling 2 nucleotides of DNA out of the RuvA tetramer per ATP hydrolyzed, thus driving DNA branch migration. The RuvB motors rotate together with the DNA substrate, which together with the progressing nucleotide cycle form the mechanistic basis for DNA recombination by continuous HJ branch migration. Branch migration allows RuvC to scan DNA until it finds its consensus sequence, where it cleaves and resolves cruciform DNA. This is Holliday junction branch migration complex subunit RuvB from Marinomonas sp. (strain MWYL1).